We begin with the raw amino-acid sequence, 213 residues long: MSADTRFESLKAIVPAVSRETANRLIAFEDLFRKWSKAINLASPSTLNELWTRHILDSAQLFPLASDAKHWLDIGSGGGFPGIVTACFLAEQPGGAIDLIESAGKKAAFLRTAAGHLHVPARVHSTRIEAMWEKIETPQVVTARALASLNDLFGLTELWLTNGAKALFQKGRDYQREIDESRVGWSFDLVQHQSAIDQASVILEITNLRRKVA.

S-adenosyl-L-methionine-binding positions include Gly75, Phe80, Ile128 to Glu129, and Arg144.

It belongs to the methyltransferase superfamily. RNA methyltransferase RsmG family.

It is found in the cytoplasm. The catalysed reaction is guanosine(527) in 16S rRNA + S-adenosyl-L-methionine = N(7)-methylguanosine(527) in 16S rRNA + S-adenosyl-L-homocysteine. Its function is as follows. Specifically methylates the N7 position of guanine in position 527 of 16S rRNA. The polypeptide is Ribosomal RNA small subunit methyltransferase G (Brucella anthropi (strain ATCC 49188 / DSM 6882 / CCUG 24695 / JCM 21032 / LMG 3331 / NBRC 15819 / NCTC 12168 / Alc 37) (Ochrobactrum anthropi)).